Reading from the N-terminus, the 99-residue chain is MEIIEIIKEFKKDISTILKDKLDRVILFGSYARGDYDEESDVDVLILVKEMPTLKEKQKIIKIASRYSLKYDILISPIIYKKTIKTSFIDEVENYGVEV.

A GSX(10)DXD motif motif is present at residues 29–43; the sequence is GSYARGDYDEESDVD. Asp41 and Asp43 together coordinate Mg(2+).

Belongs to the MntA antitoxin family. Requires Mg(2+) as cofactor.

It catalyses the reaction L-tyrosyl-[protein] + ATP = O-(5'-adenylyl)-L-tyrosyl-[protein] + diphosphate. The catalysed reaction is O-(5'-adenylyl)-L-tyrosyl-[protein] + ATP = O-[5'-(adenylyl-(5'-&gt;3')-adenylyl)]-L-tyrosyl-[protein] + diphosphate. Functionally, putative antitoxin component of a putative type VII toxin-antitoxin (TA) system. Its cognate toxin might be MF0142, which it might AMPylate. This is Putative protein adenylyltransferase MJ0141 from Methanocaldococcus jannaschii (strain ATCC 43067 / DSM 2661 / JAL-1 / JCM 10045 / NBRC 100440) (Methanococcus jannaschii).